The chain runs to 429 residues: Adenylosuccinate synthetase (429 aa).

GTP is bound by residues 13–19 (GDEGKGK) and 41–43 (GHT). Asp14 serves as the catalytic Proton acceptor. 2 residues coordinate Mg(2+): Asp14 and Gly41. IMP is bound by residues 14-17 (DEGK), 39-42 (NAGH), Thr130, Arg144, Gln224, Thr239, and Arg303. His42 serves as the catalytic Proton donor. Position 299-305 (299-305 (ATTGRAR)) interacts with substrate. GTP is bound by residues Arg305, 331-333 (KLD), and 412-414 (STG).

This sequence belongs to the adenylosuccinate synthetase family. In terms of assembly, homodimer. Mg(2+) serves as cofactor.

The protein resides in the cytoplasm. The enzyme catalyses IMP + L-aspartate + GTP = N(6)-(1,2-dicarboxyethyl)-AMP + GDP + phosphate + 2 H(+). Its pathway is purine metabolism; AMP biosynthesis via de novo pathway; AMP from IMP: step 1/2. Its function is as follows. Plays an important role in the de novo pathway of purine nucleotide biosynthesis. Catalyzes the first committed step in the biosynthesis of AMP from IMP. This chain is Adenylosuccinate synthetase, found in Psychrobacter arcticus (strain DSM 17307 / VKM B-2377 / 273-4).